The chain runs to 84 residues: Beta-defensin 119 (84 aa).

The first 21 residues, 1 to 21, serve as a signal peptide directing secretion; sequence MKLLYLFLAILLVIEEPVISG. 3 disulfide bridges follow: cysteine 28–cysteine 55, cysteine 35–cysteine 49, and cysteine 39–cysteine 56.

Belongs to the beta-defensin family.

It is found in the secreted. Has antibacterial activity. The sequence is that of Beta-defensin 119 (DEFB119) from Pongo pygmaeus (Bornean orangutan).